The following is a 319-amino-acid chain: Urease accessory protein UreD (319 aa).

Residues 298-319 (QEQPLPPSSFKTNTAVPAVRTH) form a disordered region.

It belongs to the UreD family. UreD, UreF and UreG form a complex that acts as a GTP-hydrolysis-dependent molecular chaperone, activating the urease apoprotein by helping to assemble the nickel containing metallocenter of UreC. The UreE protein probably delivers the nickel.

The protein resides in the cytoplasm. Its function is as follows. Required for maturation of urease via the functional incorporation of the urease nickel metallocenter. The protein is Urease accessory protein UreD of Synechococcus sp. (strain WH7805).